A 739-amino-acid chain; its full sequence is MGITKTSPNTTILLKTFHNNSMSQDYHHHHHHNQHQGGIFNFSNGFDRSDSPNLTTQQKQEHQRVEMDEESSVAGGRIPVYESAGMLSEMFNFPGSSGGGRDLDLGQSFRSNRQLLEEQHQNIPAMNATDSATATAAAMQLFLMNPPPPQQPPSPSSTTSPRSHHNSSTLHMLLPSPSTNTTHHQNYTNHMSMHQLPHQHHQQISTWQSSPDHHHHHHNSQTEIGTVHVENSGGHGGQGLSLSLSSSLEAAAKAEEYRNIYYGANSSNASPHHQYNQFKTLLANSSQHHHQVLNQFRSSPAASSSSMAAVNILRNSRYTTAAQELLEEFCSVGRGFLKKNKLGNSSNPNTCGGDGGGSSPSSAGANKEHPPLSASDRIEHQRRKVKLLTMLEEVDRRYNHYCEQMQMVVNSFDIVMGHGAALPYTALAQKAMSRHFRCLKDAVAAQLKQSCELLGDKDAAGISSSGLTKGETPRLRLLEQSLRQNRAFHQMGMMEQEAWRPQRGLPERSVNILRAWLFEHFLHPYPSDADKHLLARQTGLSRNQVSNWFINARVRLWKPMVEEMYQQESKEREREEELEENEEDQETKNSNDDKSTKSNNNESNFTAVRTTSQTPTTTAPDASDADAAVATGHRLRSNINAYENDASSLLLPSSYSNAAAPAAVSDDLNSRYGGSDAFSAVATCQQSVGGFDDADMDGVNVIRFGTNPTGDVSLTLGLRHAGNMPDKDASFCVREFGGF.

Disordered stretches follow at residues 23–73 (SQDY…ESSV) and 143–222 (LMNP…NSQT). The segment covering 41–58 (NFSNGFDRSDSPNLTTQQ) has biased composition (polar residues). A compositionally biased stretch (pro residues) spans 145-155 (NPPPPQQPPSP). A compositionally biased stretch (low complexity) spans 179–190 (TNTTHHQNYTNH). The segment at 316-332 (SRYTTAAQELLEEFCSV) is SR/KY domain. The disordered stretch occupies residues 341–378 (KLGNSSNPNTCGGDGGGSSPSSAGANKEHPPLSASDRI). The interval 376 to 447 (DRIEHQRRKV…CLKDAVAAQL (72 aa)) is BELL domain. The segment at residues 498–560 (AWRPQRGLPE…NARVRLWKPM (63 aa)) is a DNA-binding region (homeobox). The disordered stretch occupies residues 567 to 627 (QESKEREREE…TAPDASDADA (61 aa)). Over residues 576–585 (EELEENEEDQ) the composition is skewed to acidic residues. Residues 586-596 (ETKNSNDDKST) are compositionally biased toward basic and acidic residues. Positions 597–627 (KSNNNESNFTAVRTTSQTPTTTAPDASDADA) are enriched in low complexity.

It belongs to the TALE/BELL homeobox family. May form heterodimeric complexes with TALE/KNOX proteins STM, KNAT1/BP, KNAT2 and KNAT5. Interacts with OFP1, OFP2, OFP4 and OFP5. Interacts with KNATM, isoform KNATM-B. In terms of tissue distribution, expressed in lateral organs.

It localises to the nucleus. Transcription factor that establishes leaf shape by repressing growth in specific subdomains of the leaf. Negatively regulates knox homeobox gene KNAT1/BP expression. This chain is BEL1-like homeodomain protein 2 (BLH2), found in Arabidopsis thaliana (Mouse-ear cress).